The following is a 324-amino-acid chain: Putative ribose-phosphate pyrophosphokinase 2 (324 aa).

Residues 43–45 (DGE) and 102–103 (RQ) each bind ATP. Mg(2+) is bound at residue histidine 136. D-ribose 5-phosphate contacts are provided by residues aspartate 225 and 229 to 233 (NTGKT).

This sequence belongs to the ribose-phosphate pyrophosphokinase family. Class I subfamily. In terms of assembly, homohexamer. Mg(2+) serves as cofactor.

Its subcellular location is the cytoplasm. It catalyses the reaction D-ribose 5-phosphate + ATP = 5-phospho-alpha-D-ribose 1-diphosphate + AMP + H(+). The protein operates within metabolic intermediate biosynthesis; 5-phospho-alpha-D-ribose 1-diphosphate biosynthesis; 5-phospho-alpha-D-ribose 1-diphosphate from D-ribose 5-phosphate (route I): step 1/1. In terms of biological role, involved in the biosynthesis of the central metabolite phospho-alpha-D-ribosyl-1-pyrophosphate (PRPP) via the transfer of pyrophosphoryl group from ATP to 1-hydroxyl of ribose-5-phosphate (Rib-5-P). This Streptococcus agalactiae serotype III (strain NEM316) protein is Putative ribose-phosphate pyrophosphokinase 2.